We begin with the raw amino-acid sequence, 121 residues long: Large ribosomal subunit protein uL18 (121 aa).

Belongs to the universal ribosomal protein uL18 family. In terms of assembly, part of the 50S ribosomal subunit; part of the 5S rRNA/L5/L18/L25 subcomplex. Contacts the 5S and 23S rRNAs.

This is one of the proteins that bind and probably mediate the attachment of the 5S RNA into the large ribosomal subunit, where it forms part of the central protuberance. The polypeptide is Large ribosomal subunit protein uL18 (Thermoanaerobacter pseudethanolicus (strain ATCC 33223 / 39E) (Clostridium thermohydrosulfuricum)).